Here is a 459-residue protein sequence, read N- to C-terminus: Protein ABHD15 (459 aa).

The N-terminal stretch at 1-28 (MPPWAAALALLLAALALLLLRPWKRAVG) is a signal peptide. Active-site charge relay system residues include aspartate 351 and histidine 382. Serine 425 is modified (phosphoserine).

It belongs to the AB hydrolase superfamily. AB hydrolase 4 family. In terms of assembly, interacts with PDE3B; this interaction regulates PDE3B's stability and expression and, thereby, impacts the antilipolytic action of insulin. Mainly expressed in adipocytes and adipose depots, followed by a weak expression in liver and pancreas. In white adipose tissue (WAT), only expressed in mature adipocytes and primary adipocytes differentiated from stromal vascular cells (SVCs), but not in undifferentiated SVCs.

The protein localises to the secreted. Functionally, may regulate adipocyte lipolysis and liver lipid accumulation. This is Protein ABHD15 from Mus musculus (Mouse).